A 606-amino-acid chain; its full sequence is DNA ligase (606 aa).

ATP is bound at residue glutamate 263. Lysine 265 (N6-AMP-lysine intermediate) is an active-site residue. 6 residues coordinate ATP: arginine 270, arginine 285, glutamate 315, phenylalanine 355, arginine 432, and lysine 438.

The protein belongs to the ATP-dependent DNA ligase family. Mg(2+) is required as a cofactor. The cofactor is Mn(2+).

It carries out the reaction ATP + (deoxyribonucleotide)n-3'-hydroxyl + 5'-phospho-(deoxyribonucleotide)m = (deoxyribonucleotide)n+m + AMP + diphosphate.. The catalysed reaction is ADP + (deoxyribonucleotide)n-3'-hydroxyl + 5'-phospho-(deoxyribonucleotide)m = (deoxyribonucleotide)n+m + AMP + phosphate.. The enzyme catalyses GTP + (deoxyribonucleotide)n-3'-hydroxyl + 5'-phospho-(deoxyribonucleotide)m = (deoxyribonucleotide)n+m + GMP + diphosphate.. Its function is as follows. DNA ligase that seals nicks in double-stranded DNA during DNA replication, DNA recombination and DNA repair. Can use ATP, ADP and GTP, but not CTP, TTP or NAD(+). The sequence is that of DNA ligase from Sulfophobococcus zilligii.